The following is a 427-amino-acid chain: MKTQIQAIHAREILDSRGNPTVEVDVTLECGAMGRASVPSGASTGAHEAVELRDKDTQRYSGKGVLKAVSNVNTEILESVRGMNAIDQEQIDHLMIKLDGTSDKSRLGGNAILGVSLAVARAAASALNLPLFQYLGGEQAARMPVPMFNILNGGVHANWQGPDFQEFMIAPTGAGSFKEALRWGSEVYHELKAVLKDAGYSTAVGDEGGFAPALKKNSDAIELIIKAIERAGYTPGSQIEIAIDPASSGFYENGLYHLRSEGRKVDAQELINLYSSWVDKYPIAVLEDGLAEDDWSGWKLLNAALGDRIELVGDDLFVTNVERIQRGITENVANAVLIKPNQIGTLTETKAAIEMAYGANWGAMVSHRSGETVDSSIADLTVAMGTGHLKTGAPCRGERVEKYNQFLRIEEDLGSRAFYAGHDAFVR.

(2R)-2-phosphoglycerate is bound at residue Gln165. The Proton donor role is filled by Glu207. Residues Asp244, Glu287, and Asp314 each coordinate Mg(2+). (2R)-2-phosphoglycerate contacts are provided by Lys339, Arg368, Ser369, and Lys390. Catalysis depends on Lys339, which acts as the Proton acceptor.

Belongs to the enolase family. In terms of assembly, component of the RNA degradosome, a multiprotein complex involved in RNA processing and mRNA degradation. It depends on Mg(2+) as a cofactor.

The protein localises to the cytoplasm. Its subcellular location is the secreted. It is found in the cell surface. It carries out the reaction (2R)-2-phosphoglycerate = phosphoenolpyruvate + H2O. It participates in carbohydrate degradation; glycolysis; pyruvate from D-glyceraldehyde 3-phosphate: step 4/5. Its function is as follows. Catalyzes the reversible conversion of 2-phosphoglycerate (2-PG) into phosphoenolpyruvate (PEP). It is essential for the degradation of carbohydrates via glycolysis. The protein is Enolase 2 of Pseudomonas syringae pv. tomato (strain ATCC BAA-871 / DC3000).